A 78-amino-acid polypeptide reads, in one-letter code: MDVKSTEYLQFVKVKWPGKKTYDIEVLNKDGSLTLGYIKWWGPWWTYTFHTISNIVLDPKCLNTITSYINQLMEERKQ.

This is an uncharacterized protein from Mycoplasma (Bacteriophage L2).